A 129-amino-acid chain; its full sequence is Small ribosomal subunit protein uS11 (129 aa).

Belongs to the universal ribosomal protein uS11 family. In terms of assembly, part of the 30S ribosomal subunit. Interacts with proteins S7 and S18. Binds to IF-3.

Functionally, located on the platform of the 30S subunit, it bridges several disparate RNA helices of the 16S rRNA. Forms part of the Shine-Dalgarno cleft in the 70S ribosome. The polypeptide is Small ribosomal subunit protein uS11 (Levilactobacillus brevis (strain ATCC 367 / BCRC 12310 / CIP 105137 / JCM 1170 / LMG 11437 / NCIMB 947 / NCTC 947) (Lactobacillus brevis)).